We begin with the raw amino-acid sequence, 152 residues long: TOMM20-like protein 1 (152 aa).

Residues 1-6 are Mitochondrial intermembrane-facing; the sequence is MPSVRL. Residues 7–27 form a helical membrane-spanning segment; it reads GVGLLAGLAAGGAVVLLSYCV. Residues 28-152 are Cytoplasmic-facing; it reads YLDWRRHRDP…STEHLKDDPD (125 aa).

This sequence belongs to the Tom20 family.

The protein resides in the mitochondrion outer membrane. This chain is TOMM20-like protein 1 (Tomm20l), found in Mus musculus (Mouse).